A 380-amino-acid chain; its full sequence is NF-kappa-B inhibitor-like protein 1 (380 aa).

The tract at residues 1–34 (MSNPSPQVPEGEASTSVCRPKSSMASTSRRQRRE) is disordered. Polar residues predominate over residues 13 to 28 (ASTSVCRPKSSMASTS). ANK repeat units lie at residues 64-93 (GQPP…DPAH) and 97-133 (HGDT…IKNK). 2 disordered regions span residues 131-167 (KNKD…EWRQ) and 185-293 (EDDA…RGSL). Ser150 is modified (phosphoserine). The span at 150–159 (SAEEEEEDEA) shows a compositional bias: acidic residues. Basic and acidic residues-rich tracts occupy residues 204–221 (RMAR…ETEG) and 236–272 (RQQE…RDPV).

In terms of assembly, interacts with CACTIN (via N-terminal domain); the interaction occurs in a pro-inflammatory-independent manner.

It is found in the nucleus. Involved in the regulation of innate immune response. Acts as negative regulator of Toll-like receptor and interferon-regulatory factor (IRF) signaling pathways. Contributes to the negative regulation of transcriptional activation of NF-kappa-B target genes in response to endogenous pro-inflammatory stimuli. The chain is NF-kappa-B inhibitor-like protein 1 (NFKBIL1) from Sus scrofa (Pig).